Here is a 291-residue protein sequence, read N- to C-terminus: Nucleotide-binding protein Ccel_2290 (291 aa).

Position 8 to 15 (8 to 15 (GMSGAGKS)) interacts with ATP. 59 to 62 (DIRG) contributes to the GTP binding site.

The protein belongs to the RapZ-like family.

Displays ATPase and GTPase activities. The chain is Nucleotide-binding protein Ccel_2290 from Ruminiclostridium cellulolyticum (strain ATCC 35319 / DSM 5812 / JCM 6584 / H10) (Clostridium cellulolyticum).